We begin with the raw amino-acid sequence, 332 residues long: Fructose-1,6-bisphosphatase class 1 (332 aa).

Glu91, Asp112, Leu114, and Asp115 together coordinate Mg(2+). Residues 115 to 118 (DGSS), Asn208, Tyr241, and Lys271 contribute to the substrate site. Glu277 lines the Mg(2+) pocket.

It belongs to the FBPase class 1 family. Homotetramer. Requires Mg(2+) as cofactor.

It localises to the cytoplasm. It catalyses the reaction beta-D-fructose 1,6-bisphosphate + H2O = beta-D-fructose 6-phosphate + phosphate. Its pathway is carbohydrate biosynthesis; Calvin cycle. The polypeptide is Fructose-1,6-bisphosphatase class 1 (Chlorobium phaeobacteroides (strain DSM 266 / SMG 266 / 2430)).